A 528-amino-acid chain; its full sequence is Peptide chain release factor 3 (528 aa).

A tr-type G domain is found at Ala-10–Arg-280. GTP is bound by residues Ser-19 to Thr-26, Asp-87 to His-91, and Asn-141 to Asp-144.

Belongs to the TRAFAC class translation factor GTPase superfamily. Classic translation factor GTPase family. PrfC subfamily.

It is found in the cytoplasm. Increases the formation of ribosomal termination complexes and stimulates activities of RF-1 and RF-2. It binds guanine nucleotides and has strong preference for UGA stop codons. It may interact directly with the ribosome. The stimulation of RF-1 and RF-2 is significantly reduced by GTP and GDP, but not by GMP. The sequence is that of Peptide chain release factor 3 from Desulfotalea psychrophila (strain LSv54 / DSM 12343).